Reading from the N-terminus, the 335-residue chain is Anthranilate phosphoribosyltransferase (335 aa).

5-phospho-alpha-D-ribose 1-diphosphate-binding positions include Gly-79, 82 to 83 (GD), Thr-87, 89 to 92 (NVST), 107 to 115 (KHCNKGVSS), and Ser-119. Position 79 (Gly-79) interacts with anthranilate. Ser-91 contributes to the Mg(2+) binding site. Asn-110 lines the anthranilate pocket. Arg-165 is an anthranilate binding site. 2 residues coordinate Mg(2+): Asp-223 and Glu-224.

This sequence belongs to the anthranilate phosphoribosyltransferase family. Homodimer. The cofactor is Mg(2+).

It carries out the reaction N-(5-phospho-beta-D-ribosyl)anthranilate + diphosphate = 5-phospho-alpha-D-ribose 1-diphosphate + anthranilate. It participates in amino-acid biosynthesis; L-tryptophan biosynthesis; L-tryptophan from chorismate: step 2/5. Catalyzes the transfer of the phosphoribosyl group of 5-phosphorylribose-1-pyrophosphate (PRPP) to anthranilate to yield N-(5'-phosphoribosyl)-anthranilate (PRA). The polypeptide is Anthranilate phosphoribosyltransferase (Buchnera aphidicola subsp. Schizaphis graminum (strain Sg)).